Consider the following 374-residue polypeptide: Anhydro-N-acetylmuramic acid kinase (374 aa).

15-22 (GTSADGID) contacts ATP.

It belongs to the anhydro-N-acetylmuramic acid kinase family.

The catalysed reaction is 1,6-anhydro-N-acetyl-beta-muramate + ATP + H2O = N-acetyl-D-muramate 6-phosphate + ADP + H(+). The protein operates within amino-sugar metabolism; 1,6-anhydro-N-acetylmuramate degradation. It participates in cell wall biogenesis; peptidoglycan recycling. Functionally, catalyzes the specific phosphorylation of 1,6-anhydro-N-acetylmuramic acid (anhMurNAc) with the simultaneous cleavage of the 1,6-anhydro ring, generating MurNAc-6-P. Is required for the utilization of anhMurNAc either imported from the medium or derived from its own cell wall murein, and thus plays a role in cell wall recycling. In Xanthomonas axonopodis pv. citri (strain 306), this protein is Anhydro-N-acetylmuramic acid kinase.